A 591-amino-acid polypeptide reads, in one-letter code: CTP synthase (591 aa).

An amidoligase domain region spans residues Met-1–Leu-281. Ser-23 contacts CTP. Ser-23 serves as a coordination point for UTP. Residues Ser-24–Leu-29 and Asp-81 contribute to the ATP site. Positions 81 and 155 each coordinate Mg(2+). CTP-binding positions include Asp-162 to Glu-164, Lys-202 to Gln-207, and Lys-238. UTP-binding positions include Lys-202–Gln-207 and Lys-238. The Glutamine amidotransferase type-1 domain maps to Arg-306–Glu-554. Gly-369 is an L-glutamine binding site. Cys-396 functions as the Nucleophile; for glutamine hydrolysis in the catalytic mechanism. L-glutamine-binding positions include Leu-397 to Gln-400, Glu-419, and Arg-480. Catalysis depends on residues His-527 and Glu-529. The disordered stretch occupies residues Ala-568–Gly-591.

It belongs to the CTP synthase family. In terms of assembly, homotetramer.

It carries out the reaction UTP + L-glutamine + ATP + H2O = CTP + L-glutamate + ADP + phosphate + 2 H(+). The enzyme catalyses L-glutamine + H2O = L-glutamate + NH4(+). It catalyses the reaction UTP + NH4(+) + ATP = CTP + ADP + phosphate + 2 H(+). Its pathway is pyrimidine metabolism; CTP biosynthesis via de novo pathway; CTP from UDP: step 2/2. Its activity is regulated as follows. Allosterically activated by GTP, when glutamine is the substrate; GTP has no effect on the reaction when ammonia is the substrate. The allosteric effector GTP functions by stabilizing the protein conformation that binds the tetrahedral intermediate(s) formed during glutamine hydrolysis. Inhibited by the product CTP, via allosteric rather than competitive inhibition. Its function is as follows. Catalyzes the ATP-dependent amination of UTP to CTP with either L-glutamine or ammonia as the source of nitrogen. Regulates intracellular CTP levels through interactions with the four ribonucleotide triphosphates. This chain is CTP synthase, found in Rhodococcus jostii (strain RHA1).